A 238-amino-acid polypeptide reads, in one-letter code: Small ribosomal subunit protein uS2c (238 aa).

The protein belongs to the universal ribosomal protein uS2 family.

Its subcellular location is the plastid. It localises to the chloroplast. The polypeptide is Small ribosomal subunit protein uS2c (rps2) (Nuphar advena (Common spatterdock)).